Here is a 325-residue protein sequence, read N- to C-terminus: Malate dehydrogenase (325 aa).

11–17 (GAAGHVS) lines the NAD(+) pocket. Residues Arg-92 and Arg-98 each contribute to the substrate site. Residues Asn-105, Gln-112, and 129-131 (VGN) contribute to the NAD(+) site. Substrate-binding residues include Asn-131 and Arg-162. His-187 functions as the Proton acceptor in the catalytic mechanism.

The protein belongs to the LDH/MDH superfamily. MDH type 2 family.

It catalyses the reaction (S)-malate + NAD(+) = oxaloacetate + NADH + H(+). In terms of biological role, catalyzes the reversible oxidation of malate to oxaloacetate. The polypeptide is Malate dehydrogenase (Desulfotalea psychrophila (strain LSv54 / DSM 12343)).